Here is a 253-residue protein sequence, read N- to C-terminus: ATP synthase subunit a (253 aa).

Transmembrane regions (helical) follow at residues 30–50 (FTNA…VLLA), 88–108 (FFPF…IGLV), 118–138 (IAVT…YGLI), 144–164 (FLGI…MIMI), 184–204 (MLAG…LLGA), and 211–231 (VAPL…LVAF).

This sequence belongs to the ATPase A chain family. In terms of assembly, F-type ATPases have 2 components, CF(1) - the catalytic core - and CF(0) - the membrane proton channel. CF(1) has five subunits: alpha(3), beta(3), gamma(1), delta(1), epsilon(1). CF(0) has three main subunits: a(1), b(2) and c(9-12). The alpha and beta chains form an alternating ring which encloses part of the gamma chain. CF(1) is attached to CF(0) by a central stalk formed by the gamma and epsilon chains, while a peripheral stalk is formed by the delta and b chains.

The protein resides in the cell inner membrane. Functionally, key component of the proton channel; it plays a direct role in the translocation of protons across the membrane. This is ATP synthase subunit a from Beijerinckia indica subsp. indica (strain ATCC 9039 / DSM 1715 / NCIMB 8712).